Reading from the N-terminus, the 121-residue chain is Large ribosomal subunit protein uL18 (121 aa).

This sequence belongs to the universal ribosomal protein uL18 family. In terms of assembly, part of the 50S ribosomal subunit; part of the 5S rRNA/L5/L18/L25 subcomplex. Contacts the 5S and 23S rRNAs.

In terms of biological role, this is one of the proteins that bind and probably mediate the attachment of the 5S RNA into the large ribosomal subunit, where it forms part of the central protuberance. The polypeptide is Large ribosomal subunit protein uL18 (Acidovorax ebreus (strain TPSY) (Diaphorobacter sp. (strain TPSY))).